Here is a 204-residue protein sequence, read N- to C-terminus: U1 small nuclear ribonucleoprotein C (204 aa).

The Matrin-type zinc finger occupies 4-36; that stretch reads FFCDYCDVYLTHDSMSVRKAHNSGRNHLRNVVD. The tract at residues 65-204 is disordered; that stretch reads ANPMLPQNQP…GAGAPGHEKR (140 aa). Pro residues-rich tracts occupy residues 77–154 and 166–192; these read GFPP…PGAP and APPP…PGFA.

The protein belongs to the U1 small nuclear ribonucleoprotein C family. In terms of assembly, U1 snRNP is composed of the 7 core Sm proteins B/B', D1, D2, D3, E, F and G that assemble in a heptameric protein ring on the Sm site of the small nuclear RNA to form the core snRNP, and at least 3 U1 snRNP-specific proteins U1-70K, U1-A and U1-C. U1-C interacts with U1 snRNA and the 5' splice-site region of the pre-mRNA.

It is found in the nucleus. In terms of biological role, component of the spliceosomal U1 snRNP, which is essential for recognition of the pre-mRNA 5' splice-site and the subsequent assembly of the spliceosome. U1-C is directly involved in initial 5' splice-site recognition for both constitutive and regulated alternative splicing. The interaction with the 5' splice-site seems to precede base-pairing between the pre-mRNA and the U1 snRNA. Stimulates commitment or early (E) complex formation by stabilizing the base pairing of the 5' end of the U1 snRNA and the 5' splice-site region. The polypeptide is U1 small nuclear ribonucleoprotein C (Fusarium vanettenii (strain ATCC MYA-4622 / CBS 123669 / FGSC 9596 / NRRL 45880 / 77-13-4) (Fusarium solani subsp. pisi)).